The following is a 569-amino-acid chain: Probable protein phosphatase 2C BIPP2C1 (569 aa).

Disordered stretches follow at residues 166–212 (GSSN…SSKV) and 251–279 (SLDD…GSSI). A compositionally biased stretch (low complexity) spans 174–183 (SEVGVESECG). The PPM-type phosphatase domain occupies 329–564 (AAMLPHPSKV…DDVTVVVSVV (236 aa)). Mn(2+) is bound by residues Asp-358, Gly-359, Asp-488, and Asp-555.

This sequence belongs to the PP2C family. Mg(2+) is required as a cofactor. The cofactor is Mn(2+).

The enzyme catalyses O-phospho-L-seryl-[protein] + H2O = L-seryl-[protein] + phosphate. It carries out the reaction O-phospho-L-threonyl-[protein] + H2O = L-threonyl-[protein] + phosphate. Functionally, may play a role in responses to biotic and abiotic stresses. The polypeptide is Probable protein phosphatase 2C BIPP2C1 (BIPP2C1) (Oryza sativa subsp. indica (Rice)).